Here is a 349-residue protein sequence, read N- to C-terminus: 3'-5' exoribonuclease 1 (349 aa).

Composition is skewed to basic and acidic residues over residues 1–10 (MEDPQSKEPA) and 22–35 (PRPE…RPSP). The segment at 1–48 (MEDPQSKEPAGEAVALALLESPRPEGGEEPPRPSPEETQQCKFDGQET) is disordered. Phosphoserine occurs at positions 59 and 62. The SAP domain maps to 76-110 (INRMSKEELRAKLSEFKLETRGVKDVLKKRLKNYY). The region spanning 130-306 (ICIIDFEATC…DDSKNIARIA (177 aa)) is the Exonuclease domain. Mg(2+) is bound by residues aspartate 134 and glutamate 136. Catalysis depends on glutamate 136, which acts as the Proton acceptor. 2 residues coordinate AMP: glutamate 136 and alanine 137. Aspartate 234 provides a ligand contact to Mg(2+). Histidine 293 (proton acceptor) is an active-site residue. Histidine 293 serves as a coordination point for AMP. Aspartate 298 is a binding site for Mg(2+).

As to quaternary structure, identified in a histone pre-mRNA complex, at least composed of ERI1, LSM11, SLBP, SNRPB, SYNCRIP and YBX1. Interacts in a cooperative manner with SLBP to the mature 3'-end of histone mRNAs. Binds to 40S and 60S ribosomal subunits and to 80S assembled ribosomes. Found in a ternary complex with SLBP and the stem-loop structure of the 3'-end of histone mRNAs. Mg(2+) is required as a cofactor.

The protein resides in the cytoplasm. Its subcellular location is the nucleus. It is found in the nucleolus. It catalyses the reaction Exonucleolytic cleavage in the 3'- to 5'-direction to yield nucleoside 5'-phosphates.. Although it can bind simultaneously with SLBP to the 3'-end of histone mRNA, the presence of SLBP prevents the exonuclease activity. Its function is as follows. RNA exonuclease that binds to the 3'-end of histone mRNAs and degrades them, suggesting that it plays an essential role in histone mRNA decay after replication. A 2' and 3'-hydroxyl groups at the last nucleotide of the histone 3'-end is required for efficient 3'-end histone mRNA exonuclease activity and degradation of RNA substrates. Also able to degrade the 3'-overhangs of short interfering RNAs (siRNAs) in vitro, suggesting a possible role as regulator of RNA interference (RNAi). Required for binding the 5'-ACCCA-3' sequence present in stem-loop structure. Able to bind other mRNAs. Required for 5.8S rRNA 3'-end processing. Also binds to 5.8s ribosomal RNA. Binds with high affinity to the stem-loop structure of replication-dependent histone pre-mRNAs. In vitro, does not have sequence specificity. In vitro, has weak DNA exonuclease activity. In vitro, shows biphasic kinetics such that there is rapid hydrolysis of the last three unpaired RNA nucleotides in the 39 flanking sequence followed by a much slower cleavage through the stem that occurs over a longer incubation period in the order of hours. ERI1-mediated RNA metabolism plays a key role in chondrogenesis. The polypeptide is 3'-5' exoribonuclease 1 (Homo sapiens (Human)).